We begin with the raw amino-acid sequence, 243 residues long: MSDRKTIADSKRAFNHDFPHVIPSLYRRTTDELLVELHLLSHQKHFHPDALFAIGLSQVFDVFTSGYRPEAHVKTLFDALCRSCGFDPNALRKQAQQTLESVRGHDLEEVQGWIQQQGKGAPEALAKALRNTAGSTTFHYSRLMAVGLLSLLASAQGDESSDPEKLSQIAHELSESVGFSKARVEKDLNLYKSNLEKMAQAVELTEQILESERRKREQNESAKLNTGSSEQMSQGVEACSNIS.

A coiled-coil region spans residues 180-224 (SKARVEKDLNLYKSNLEKMAQAVELTEQILESERRKREQNESAKL). Residues 210 to 220 (ESERRKREQNE) show a composition bias toward basic and acidic residues. The disordered stretch occupies residues 210-243 (ESERRKREQNESAKLNTGSSEQMSQGVEACSNIS). Residues 221 to 243 (SAKLNTGSSEQMSQGVEACSNIS) show a composition bias toward polar residues.

This sequence belongs to the THF1 family.

Its function is as follows. May be involved in photosynthetic membrane biogenesis. The sequence is that of Protein Thf1 from Prochlorococcus marinus (strain MIT 9313).